Consider the following 30-residue polypeptide: Serum amyloid P-component (30 aa).

The 30-residue stretch at A1 to F30 folds into the Pentraxin (PTX) domain.

Belongs to the pentraxin family. Homopentamer. Discoid arrangement of 5 covalently bound subunits. It depends on Ca(2+) as a cofactor.

It is found in the secreted. The sequence is that of Serum amyloid P-component from Anarhichas lupus (Atlantic wolffish).